The primary structure comprises 129 residues: RxLR effector protein PexRD43 (129 aa).

The N-terminal stretch at Met-1–Gly-16 is a signal peptide. The RxLR-dEER signature appears at Arg-44 to Arg-56.

It belongs to the RxLR effector family.

It is found in the secreted. Its subcellular location is the host cytoplasm. It localises to the host nucleus. Its function is as follows. Effector that enhances P.infestans colonization of Nicotiana benthamiana leaves. The chain is RxLR effector protein PexRD43 from Phytophthora infestans (strain T30-4) (Potato late blight agent).